A 237-amino-acid polypeptide reads, in one-letter code: MKPSVVMIEPNGHFCSDCAIRTSAVCSSLDAAELREFEHLGRRVHFSSGETVFSEEDITTSFYNVLEGVMRLYKLLPDGRRQIVGFALPGDFLGMNLSGRHNFSADAIGAVTVCQFAKAPFGRFIEERPQLLRRINELAIRELSQARDHMVLLGRRSADEKVAAFLLGWRERLLALKGASDTVPLPMSRQDIADYLGLTIETVSRTFTKLERHGAIAIIHGGISLLDPARVEALAAA.

Residues 156-229 form the HTH crp-type domain; sequence RSADEKVAAF…HGGISLLDPA (74 aa). The H-T-H motif DNA-binding region spans 189–208; sequence RQDIADYLGLTIETVSRTFT.

Its function is as follows. B.japonicum has two FixLJ-dependent FixK homologs that are activators of the transcription of a group of genes involved in anaerobic processes such as denitrification and possibly nitrogen fixation. FixK may bind DNA at the FNR consensus binding site. This chain is Nitrogen fixation regulation protein FixK (fixK), found in Bradyrhizobium diazoefficiens (strain JCM 10833 / BCRC 13528 / IAM 13628 / NBRC 14792 / USDA 110).